We begin with the raw amino-acid sequence, 251 residues long: Putative glutamine amidotransferase YLR126C (251 aa).

The 185-residue stretch at 48 to 232 (EVFHVQKNVF…NRYERQCQEL (185 aa)) folds into the Glutamine amidotransferase type-1 domain. Active-site for GATase activity residues include Cys112, His198, and Glu200.

The protein resides in the cytoplasm. In terms of biological role, may have a role in copper and iron homeostasis. The protein is Putative glutamine amidotransferase YLR126C of Saccharomyces cerevisiae (strain ATCC 204508 / S288c) (Baker's yeast).